The chain runs to 988 residues: Transposase for transposon Tn1546 (988 aa).

It belongs to the transposase 7 family.

Functionally, required for transposition of transposon Tn1546. The protein is Transposase for transposon Tn1546 of Enterococcus faecium (Streptococcus faecium).